The following is a 76-amino-acid chain: Large ribosomal subunit protein eL20 (76 aa).

Belongs to the eukaryotic ribosomal protein eL20 family. Part of the 50S ribosomal subunit. Binds 23S rRNA.

The chain is Large ribosomal subunit protein eL20 from Methanocaldococcus jannaschii (strain ATCC 43067 / DSM 2661 / JAL-1 / JCM 10045 / NBRC 100440) (Methanococcus jannaschii).